The primary structure comprises 312 residues: Olfactory receptor 4L1 (312 aa).

Over 1–25 (MDLKNGSLVTEFILLGFFGRWELQI) the chain is Extracellular. Residue N5 is glycosylated (N-linked (GlcNAc...) asparagine). The chain crosses the membrane as a helical span at residues 26–49 (FFFVTFSLIYGATVMGNILIMVTV). Residues 50–57 (TCRSTLHS) lie on the Cytoplasmic side of the membrane. The chain crosses the membrane as a helical span at residues 58–79 (PLYFLLGNLSFLDMCLSTATTP). The Extracellular portion of the chain corresponds to 80 to 100 (KMIIDLLTDHKTISVWGCVTQ). A disulfide bridge links C97 with C189. A helical transmembrane segment spans residues 101-120 (MFFMHFFGGAEMTLLIIMAF). The Cytoplasmic segment spans residues 121–139 (DRYVAICKPLHYRTIMSHK). Residues 140-158 (LLKGFAILSWIIGFLHSIS) form a helical membrane-spanning segment. Topologically, residues 159–195 (QIVLTMNLPFCGHNVINNIFCDLPLVIKLACIETYTL) are extracellular. Residues 196-219 (ELFVIADSGLLSFTCFILLLVSYI) traverse the membrane as a helical segment. At 220–235 (VILVSVPKKSSHGLSK) the chain is on the cytoplasmic side. Residues 236-258 (ALSTLSAHIIVVTLFFGPCIFIY) form a helical membrane-spanning segment. The Extracellular segment spans residues 259-269 (VWPFSSLASNK). N268 carries an N-linked (GlcNAc...) asparagine glycan. A helical transmembrane segment spans residues 270 to 289 (TLAVFYTVITPLLNPSIYTL). Topologically, residues 290-312 (RNKKMQEAIRKLRFQYVSSAQNF) are cytoplasmic.

It belongs to the G-protein coupled receptor 1 family.

The protein resides in the cell membrane. Its function is as follows. Odorant receptor. The protein is Olfactory receptor 4L1 (OR4L1) of Homo sapiens (Human).